The chain runs to 341 residues: HTH-type transcriptional repressor PurR (341 aa).

In terms of domain architecture, HTH lacI-type spans 2–56 (ATIKDVAKRANVSTTTVSHVINKTRFVAEETRNAVWAAIKELHYSPSAVARSLKV). The H-T-H motif DNA-binding region spans 4-23 (IKDVAKRANVSTTTVSHVIN). Residues 48–56 (SAVARSLKV) mediate DNA binding. Residues Tyr-73, Arg-190, Thr-192, Phe-221, and Asp-275 each contribute to the hypoxanthine site.

Homodimer.

It functions in the pathway purine metabolism; purine nucleotide biosynthesis [regulation]. In terms of biological role, is the main repressor of the genes involved in the de novo synthesis of purine nucleotides, regulating purB, purC, purEK, purF, purHD, purL, purMN and guaBA expression. PurR is allosterically activated to bind its cognate DNA by binding the purine corepressors, hypoxanthine or guanine, thereby effecting transcription repression. This is HTH-type transcriptional repressor PurR from Salmonella typhi.